The primary structure comprises 574 residues: Glucose-6-phosphate 1-dehydrogenase, chloroplastic (574 aa).

NADP(+)-binding positions include 93-100 and Arg127; that span reads GASGDLAK. Cys145 and Cys153 are oxidised to a cystine. Lys230 is a binding site for NADP(+). D-glucose 6-phosphate contacts are provided by residues Lys230, 260-264, Glu298, and Asp317; that span reads HYLGK. His322 acts as the Proton acceptor in catalysis. Lys415 contacts NADP(+). Residues Lys418 and Lys423 each coordinate D-glucose 6-phosphate. NADP(+) contacts are provided by Arg424, Arg428, and Arg457. Gln459 provides a ligand contact to D-glucose 6-phosphate. NADP(+) contacts are provided by residues 465-467 and Arg550; that span reads YLK.

The protein belongs to the glucose-6-phosphate dehydrogenase family. In terms of assembly, homodimer.

It is found in the plastid. It localises to the chloroplast. It catalyses the reaction D-glucose 6-phosphate + NADP(+) = 6-phospho-D-glucono-1,5-lactone + NADPH + H(+). It functions in the pathway carbohydrate degradation; pentose phosphate pathway; D-ribulose 5-phosphate from D-glucose 6-phosphate (oxidative stage): step 1/3. Regulated by metabolites. Post-translationally inactivated by cysteine-mediated redox modification via the ferredoxin-thioredoxin system in the light and this avoids futile cycles with photosynthetic CO2 fixation. Catalyzes the rate-limiting step of the oxidative pentose-phosphate pathway, which represents a route for the dissimilation of carbohydrates besides glycolysis. The main function of this enzyme is to provide reducing power (NADPH) and pentose phosphates for fatty acid and nucleic acid synthesis which are involved in membrane synthesis and cell division. This is Glucose-6-phosphate 1-dehydrogenase, chloroplastic (G6PD) from Spinacia oleracea (Spinach).